The following is a 250-amino-acid chain: UPF0193 protein EVG1 homolog (250 aa).

Residues 86 to 110 (ESLRNGEPLPLPEPPRPNTNNDPDK) are disordered.

It belongs to the UPF0193 (EVG1) family.

This is UPF0193 protein EVG1 homolog from Drosophila melanogaster (Fruit fly).